A 428-amino-acid polypeptide reads, in one-letter code: Tryptophan synthase beta chain (428 aa).

K100 carries the N6-(pyridoxal phosphate)lysine modification.

It belongs to the TrpB family. Tetramer of two alpha and two beta chains. It depends on pyridoxal 5'-phosphate as a cofactor.

The enzyme catalyses (1S,2R)-1-C-(indol-3-yl)glycerol 3-phosphate + L-serine = D-glyceraldehyde 3-phosphate + L-tryptophan + H2O. It functions in the pathway amino-acid biosynthesis; L-tryptophan biosynthesis; L-tryptophan from chorismate: step 5/5. Functionally, the beta subunit is responsible for the synthesis of L-tryptophan from indole and L-serine. This chain is Tryptophan synthase beta chain, found in Streptomyces avermitilis (strain ATCC 31267 / DSM 46492 / JCM 5070 / NBRC 14893 / NCIMB 12804 / NRRL 8165 / MA-4680).